Here is a 201-residue protein sequence, read N- to C-terminus: FMN-dependent NADH:quinone oxidoreductase (201 aa).

Residues S9 and 16–18 contribute to the FMN site; that span reads SYS.

Belongs to the azoreductase type 1 family. Homodimer. It depends on FMN as a cofactor.

It carries out the reaction 2 a quinone + NADH + H(+) = 2 a 1,4-benzosemiquinone + NAD(+). The catalysed reaction is N,N-dimethyl-1,4-phenylenediamine + anthranilate + 2 NAD(+) = 2-(4-dimethylaminophenyl)diazenylbenzoate + 2 NADH + 2 H(+). Its function is as follows. Quinone reductase that provides resistance to thiol-specific stress caused by electrophilic quinones. Also exhibits azoreductase activity. Catalyzes the reductive cleavage of the azo bond in aromatic azo compounds to the corresponding amines. The sequence is that of FMN-dependent NADH:quinone oxidoreductase from Mesomycoplasma hyopneumoniae (strain 7448) (Mycoplasma hyopneumoniae).